A 310-amino-acid polypeptide reads, in one-letter code: MIIVTGGAGFIGSNIVKSLNDIGYRDILVVDNLKDGTKFVNLVDLDIADYMDKEDFIASIVAGDDLGDIDAVFHEGACSSTTEWDGKYMMDNNYQYSKDVLHYCLDRNIPFLYASSAATYGGRNDNFIEERQYEQPLNVYGYSKFLFDQYVREILPEAESQICGFRYFNVYGPREGHKGSMASVAFHLNNQINQGENPKLFSGSENFKRDFVYVGDVAAVNLWFWQNGVSGIFNCGTGRAESFQAVADATLAFHKKGGVEYIEFPEKLKGRYQAYTQADLTNLRAAGYDKPFKTVAEGVAEYMAWLNRTV.

NADP(+) is bound by residues 10–11, 31–32, lysine 38, lysine 53, 75–79, and asparagine 92; these read FI, DN, and EGACS. Tyrosine 140 (proton acceptor) is an active-site residue. Lysine 144 lines the NADP(+) pocket. A substrate-binding site is contributed by asparagine 169. NADP(+)-binding residues include valine 170 and lysine 178. Catalysis depends on lysine 178, which acts as the Proton acceptor. Substrate contacts are provided by residues serine 180, histidine 187, 201–204, arginine 209, and tyrosine 272; that span reads FSGS.

This sequence belongs to the NAD(P)-dependent epimerase/dehydratase family. HldD subfamily. As to quaternary structure, homopentamer. NADP(+) is required as a cofactor.

It catalyses the reaction ADP-D-glycero-beta-D-manno-heptose = ADP-L-glycero-beta-D-manno-heptose. The protein operates within nucleotide-sugar biosynthesis; ADP-L-glycero-beta-D-manno-heptose biosynthesis; ADP-L-glycero-beta-D-manno-heptose from D-glycero-beta-D-manno-heptose 7-phosphate: step 4/4. Its function is as follows. Catalyzes the interconversion between ADP-D-glycero-beta-D-manno-heptose and ADP-L-glycero-beta-D-manno-heptose via an epimerization at carbon 6 of the heptose. The sequence is that of ADP-L-glycero-D-manno-heptose-6-epimerase from Pectobacterium carotovorum subsp. carotovorum (strain PC1).